Here is a 485-residue protein sequence, read N- to C-terminus: Cysteine--tRNA ligase (485 aa).

Cys-27 provides a ligand contact to Zn(2+). The 'HIGH' region motif lies at 29-39; sequence ITAYDLCHLGH. Residues Cys-208, His-233, and Glu-237 each contribute to the Zn(2+) site. The 'KMSKS' region signature appears at 265–269; the sequence is KMSKS. Residue Lys-268 coordinates ATP.

The protein belongs to the class-I aminoacyl-tRNA synthetase family. Monomer. Requires Zn(2+) as cofactor.

It is found in the cytoplasm. It catalyses the reaction tRNA(Cys) + L-cysteine + ATP = L-cysteinyl-tRNA(Cys) + AMP + diphosphate. In Oleidesulfovibrio alaskensis (strain ATCC BAA-1058 / DSM 17464 / G20) (Desulfovibrio alaskensis), this protein is Cysteine--tRNA ligase.